Here is a 98-residue protein sequence, read N- to C-terminus: NADH-ubiquinone oxidoreductase chain 4L (98 aa).

The next 3 membrane-spanning stretches (helical) occupy residues 1–21 (MSLVHINVLIAFTVSLTGLLM), 29–49 (ALLCLEGMVLSLFILAALTIL), and 61–81 (IILLVFAACEAAIGLALLVMV).

It belongs to the complex I subunit 4L family. Core subunit of respiratory chain NADH dehydrogenase (Complex I) which is composed of 45 different subunits.

It is found in the mitochondrion inner membrane. The enzyme catalyses a ubiquinone + NADH + 5 H(+)(in) = a ubiquinol + NAD(+) + 4 H(+)(out). In terms of biological role, core subunit of the mitochondrial membrane respiratory chain NADH dehydrogenase (Complex I) which catalyzes electron transfer from NADH through the respiratory chain, using ubiquinone as an electron acceptor. Part of the enzyme membrane arm which is embedded in the lipid bilayer and involved in proton translocation. The polypeptide is NADH-ubiquinone oxidoreductase chain 4L (MT-ND4L) (Lagenorhynchus albirostris (White-beaked dolphin)).